We begin with the raw amino-acid sequence, 204 residues long: Protease (204 aa).

Catalysis depends on residues His54, Asp71, and Cys122.

The protein belongs to the peptidase C5 family. Interacts with protease cofactor pVI-C; this interaction is necessary for protease activation.

The protein localises to the virion. It localises to the host nucleus. The enzyme catalyses Cleaves proteins of the adenovirus and its host cell at two consensus sites: -Yaa-Xaa-Gly-Gly-|-Xaa- and -Yaa-Xaa-Gly-Xaa-|-Gly- (in which Yaa is Met, Ile or Leu, and Xaa is any amino acid).. Its activity is regulated as follows. Requires DNA and protease cofactor for maximal activation. Inside nascent virions, becomes partially activated by binding to the viral DNA, allowing it to cleave the cofactor that binds to the protease and fully activates it. Actin, like the viral protease cofactor, seems to act as a cofactor in the cleavage of cytokeratin 18 and of actin itself. Functionally, cleaves viral precursor proteins (pTP, pIIIa, pVI, pVII, pVIII, and pX) inside newly assembled particles giving rise to mature virions. Protease complexed to its cofactor slides along the viral DNA to specifically locate and cleave the viral precursors. Mature virions have a weakened organization compared to the unmature virions, thereby facilitating subsequent uncoating. Without maturation, the particle lacks infectivity and is unable to uncoat. Late in adenovirus infection, in the cytoplasm, may participate in the cytoskeleton destruction. Cleaves host cell cytoskeletal keratins K7 and K18. This chain is Protease, found in Bos taurus (Bovine).